Here is an 895-residue protein sequence, read N- to C-terminus: MGLTNILAAFIAVSSLFIQSLALNPYAKSNLAVYWGQGAGQNRLSYFCEKTSFDIIVVGFINVFPDQGPAGWPGSNFGNQCADSYYYTKNGTKTKLLDGCYQIKEDLPKCKALGKTILLSLGGGAVHDFYEVKSEESALNFADFLWGAFGPLTPDWTGPRPFGEASVDGFDFDIEKGSNFGYSIMVRRLRELFLQDPLNRYYISAAPQCIMPDKYLSHAISNSAFDFIFIQFYNNPSCSAKRWVTNPKSVTYTVDDWVKYIRKSGNPLAKLFIGLPASKSAAAKEDYLTPGEATKIVSTYMAKYPSTFGGMMVWEATASENNKLGGLPYADIMKEVLLRCDPDPPTSTVTSTISASTSTQTSSQSTTMETKTLSASTTPSSPSTVSPSSTMQTTSTGSTSTGTGTTSSQVTSSTTISTRSASTETVTTRSQEPPSTTISTRPASTETVTTRSQEPPSSTISTRSASTETVTTRSQEPPSSTISTRSASTETSTSSQDSPSTTISTKSAPTGTVTTRSQDLPSTTISTRSPETETETVTTKSQDSPSITLSTRSSSAETVSTRSQHSSSTTISTKSAPTETGTTSEHSTSMPVSTRSASTETVITRSQNSDSQSMTVSTRSPSTESITTRSQGSPSETFSTKSVPVDTISTELPSQTHSTTDSTPVSSSPTIPSGSTTIIPGTASDPVSAPTTTVPPNPTLTLAPSSSTTEDRTTITTIITTSYVTVCPTGFTTVTITYTTTYCPETASLTPTQAPIPGAPAPPPDGWTTIVTVCPQCAPTPTTVTLTVPTRSAFLPAPTETRPVVTVVPVPENPIKNVKPSESGDFVTVTTVAPATVTKTLEYNNPVDSDVNVQPTGGSSPVEFEGGAMTVRSMDVVAKALITAGAAVLGLFLGL.

Residues 1–22 (MGLTNILAAFIAVSSLFIQSLA) form the signal peptide. The GH18 domain maps to 29–340 (SNLAVYWGQG…DIMKEVLLRC (312 aa)). N90 carries N-linked (GlcNAc...) asparagine glycosylation. E175 functions as the Proton donor in the catalytic mechanism. The disordered stretch occupies residues 343–712 (DPPTSTVTST…APSSSTTEDR (370 aa)). Residues 346–425 (TSTVTSTISA…ISTRSASTET (80 aa)) show a composition bias toward low complexity. A compositionally biased stretch (polar residues) spans 426-478 (VTTRSQEPPSTTISTRPASTETVTTRSQEPPSSTISTRSASTETVTTRSQEPP). Residues 479-505 (SSTISTRSASTETSTSSQDSPSTTIST) show a composition bias toward low complexity. Over residues 506-543 (KSAPTGTVTTRSQDLPSTTISTRSPETETETVTTKSQD) the composition is skewed to polar residues. The span at 544 to 555 (SPSITLSTRSSS) shows a compositional bias: low complexity. The span at 556 to 577 (AETVSTRSQHSSSTTISTKSAP) shows a compositional bias: polar residues. Positions 578–589 (TETGTTSEHSTS) are enriched in low complexity. Polar residues predominate over residues 590–657 (MPVSTRSAST…ISTELPSQTH (68 aa)). Composition is skewed to low complexity over residues 658 to 692 (STTD…APTT) and 699 to 712 (TLTL…TEDR). G866 is lipidated: GPI-anchor amidated glycine. Positions 867–895 (GAMTVRSMDVVAKALITAGAAVLGLFLGL) are cleaved as a propeptide — removed in mature form.

The protein belongs to the glycosyl hydrolase 18 family. Chitinase class III subfamily.

It localises to the cell membrane. It carries out the reaction Random endo-hydrolysis of N-acetyl-beta-D-glucosaminide (1-&gt;4)-beta-linkages in chitin and chitodextrins.. In terms of biological role, may be associated with endosporulation. This Coccidioides immitis (strain RS) (Valley fever fungus) protein is Endochitinase 2 (CTS2).